Reading from the N-terminus, the 397-residue chain is Acetate kinase (397 aa).

Asparagine 7 lines the Mg(2+) pocket. Residue lysine 14 participates in ATP binding. Position 90 (arginine 90) interacts with substrate. Aspartate 147 functions as the Proton donor/acceptor in the catalytic mechanism. ATP contacts are provided by residues 207–211 (HLGNG), 282–284 (DFR), and 330–334 (GLGEN). Glutamate 383 contacts Mg(2+).

This sequence belongs to the acetokinase family. In terms of assembly, homodimer. Mg(2+) serves as cofactor. The cofactor is Mn(2+).

The protein localises to the cytoplasm. The catalysed reaction is acetate + ATP = acetyl phosphate + ADP. Its pathway is metabolic intermediate biosynthesis; acetyl-CoA biosynthesis; acetyl-CoA from acetate: step 1/2. Catalyzes the formation of acetyl phosphate from acetate and ATP. Can also catalyze the reverse reaction. The polypeptide is Acetate kinase (Clostridium botulinum (strain Loch Maree / Type A3)).